The chain runs to 316 residues: IDS-like terpene synthase 2 (316 aa).

Positions 69 and 73 each coordinate Mg(2+).

It belongs to the FPP/GGPP synthase family. The cofactor is Mg(2+).

The catalysed reaction is (2E)-geranyl diphosphate + H2O = linalool + diphosphate. It catalyses the reaction (2E,6E)-farnesyl diphosphate + H2O = (6E)-nerolidol + diphosphate. In terms of biological role, terpene synthase that shows monoterpene synthase activity and produces linalool, using geranyl diphosphate (GPP) as substrate. Also shows sesquiterpene synthase activity as it is able to convert farnesyl diphosphate (FPP) into (E)-nerolidol. The chain is IDS-like terpene synthase 2 from Melampsora larici-populina (strain 98AG31 / pathotype 3-4-7) (Poplar leaf rust fungus).